A 61-amino-acid polypeptide reads, in one-letter code: Small ribosomal subunit protein uS14 (61 aa).

Positions 24, 27, 40, and 43 each coordinate Zn(2+).

It belongs to the universal ribosomal protein uS14 family. Zinc-binding uS14 subfamily. In terms of assembly, part of the 30S ribosomal subunit. Contacts proteins S3 and S10. Zn(2+) serves as cofactor.

Its function is as follows. Binds 16S rRNA, required for the assembly of 30S particles and may also be responsible for determining the conformation of the 16S rRNA at the A site. This chain is Small ribosomal subunit protein uS14, found in Treponema pallidum (strain Nichols).